Reading from the N-terminus, the 560-residue chain is DNA ligase B (560 aa).

Residue lysine 124 is the N6-AMP-lysine intermediate of the active site.

This sequence belongs to the NAD-dependent DNA ligase family. LigB subfamily.

The enzyme catalyses NAD(+) + (deoxyribonucleotide)n-3'-hydroxyl + 5'-phospho-(deoxyribonucleotide)m = (deoxyribonucleotide)n+m + AMP + beta-nicotinamide D-nucleotide.. Its function is as follows. Catalyzes the formation of phosphodiester linkages between 5'-phosphoryl and 3'-hydroxyl groups in double-stranded DNA using NAD as a coenzyme and as the energy source for the reaction. The sequence is that of DNA ligase B from Shigella flexneri serotype 5b (strain 8401).